A 292-amino-acid polypeptide reads, in one-letter code: GTP cyclohydrolase FolE2 (292 aa).

Belongs to the GTP cyclohydrolase IV family.

It carries out the reaction GTP + H2O = 7,8-dihydroneopterin 3'-triphosphate + formate + H(+). It participates in cofactor biosynthesis; 7,8-dihydroneopterin triphosphate biosynthesis; 7,8-dihydroneopterin triphosphate from GTP: step 1/1. Converts GTP to 7,8-dihydroneopterin triphosphate. The protein is GTP cyclohydrolase FolE2 of Staphylococcus haemolyticus (strain JCSC1435).